A 1475-amino-acid chain; its full sequence is MESRPGSFQYVPVQLQGGAPWGFTLKGGLEHCEPLTVSKIEDGGKAALSQKMRTGDELVNINGTPLYGSRQEALILIKGSFRILKLIVRRRNTPVSRPHSWHVAKLLEGCPDVATTMHFPSEAFSLSWHSGCNTSDVSVQWCPLSRHCSTEKSSSIGSMESLEQPGQPTYEGHLLPIDQNMYPSQRDSAYSSFSASSNASDCALSLKPEEPPSTDCVMPGPGPIKVTDDQANVSENSGSSHSTSEDHVTSTSHASSYSDEGHHSGPAKMARGPPEPPVRSDSLPASRAQLLNGEQHRASEPVDSLPQKEKPGLETVLPPRSSNQFCCLSGQDQVTDEDHQNCELSKPSESSQDDCEHLLIEDSSKALDSPKAHDKGSNKEFGLLKEASADLANTLNFGAIPHLRGTMEHRHSAPEQLLASHLQQVHLDSRGSKGMELPIGQDGHQWTVSPLHNNPKGKKSPSLPTGGTQDQTRKERKTTPLDDKLMASVHQSQSDVLLGEVDGHPNRAGRASSDLTSQQPSATCSSVQQTRDFLSAHKIVDHTEASEEGDNEPKECGRLGGRRSGGPRGRSIQNRRRSERFATNLRNEIQRRKAQLQKSKGPLSQLCDTNEAVEETQEPPESPPLSASNASLLPSYKNVPSPGDKVFNKSMILRARSSECLSQASESSKARGGVEGRMSPGQRSGQSSLALNTWWKASDSSTLDTEKANAHHGVCRGHWRWSPEHNAQPQVALSTEAPSNPDDSKELKTSTPQAGEEAVLMPFADRRKFFEESSKSLSTSHLPGLTTHNNKPFIQRQKPIDQNFQSVSYRDLRCHPLDQSYHSADQSYHAADQSYHSLSPLQSETPTYPECFATKGRDNSLCCKPVHHGDCDYHRTCSHPCSAQGTVRHDPCICCSGEICPALLKRNLLPKCHNCRCHHHQCIRCTGCCHGPQHSAHEDSSMAPGNAWKSRKAAIQEFPVDKWKPITGNRKTSHSGREMAHSKAGFSLSTPFRPCIENPALDLSNYRAVSSLDILGDFKRASNKPEESSVYEDENSVASMPRPLRSRAFSESHISLEPQNTQAWGKHQRESFSKGSETQPDTLGARKKVFPPPRPPPPNWEKYRLFRAAQLQQQQQQQQQQQQQQRCEEEEEKEQEEEGEKEEDLPPQYFSSELTGSCAPNTEEQPQSLKMGHQEASRQGSQSLQEQEAFALHPSNFVPPVRGCTVPQPEKAQHPCYYGTHGLWRTTEQEATVTPKQEFQHFSPPKGASGIPTSYSAYYNISVAKAELLNKLKQQPEMAEAGLGEEGVDYELAQKKIQLIESISRKLSVLREAQRGLLDDINANAALGEEVEANLKAVCKSNEFEKYHLFIGDLDKVVNLLLSLSGRLARVENALNSIDSESNQEKLVLIEKKQQLTNQLADAKELKEHVDGREKLVFGMVSRYLPQDQLQDYQHFVKMKSALIIEQRELEEKIKLGEEQLKCLKESLHLGPSNF.

Positions 10–92 (YVPVQLQGGA…ILKLIVRRRN (83 aa)) constitute a PDZ domain. Disordered regions lie at residues 151 to 175 (EKSSSIGSMESLEQPGQPTYEGHLL) and 202 to 321 (CALS…PPRS). Residues 249–258 (TSTSHASSYS) show a composition bias toward polar residues. Basic and acidic residues predominate over residues 294 to 312 (EQHRASEPVDSLPQKEKPG). Ser412 is subject to Phosphoserine. 4 disordered regions span residues 432–523 (SKGM…PSAT), 542–577 (HTEASEEGDNEPKECGRLGGRRSGGPRGRSIQNRRR), 610–644 (NEAVEETQEPPESPPLSASNASLLPSYKNVPSPGD), and 658–688 (SECLSQASESSKARGGVEGRMSPGQRSGQSS). A compositionally biased stretch (basic and acidic residues) spans 471–485 (QTRKERKTTPLDDKL). Residues 513–523 (SDLTSQQPSAT) show a composition bias toward polar residues. Positions 542 to 557 (HTEASEEGDNEPKECG) are enriched in basic and acidic residues. Positions 558-568 (RLGGRRSGGPR) are enriched in gly residues. Low complexity-rich tracts occupy residues 624–635 (PLSASNASLLPS) and 658–667 (SECLSQASES). Ser722 carries the post-translational modification Phosphoserine. 2 stretches are compositionally biased toward polar residues: residues 727-738 (AQPQVALSTEAP) and 775-791 (KSLSTSHLPGLTTHNNK). Disordered regions lie at residues 727–753 (AQPQVALSTEAPSNPDDSKELKTSTPQ) and 772–791 (ESSKSLSTSHLPGLTTHNNK). A Phosphoserine modification is found at Ser1010. Disordered stretches follow at residues 1022-1041 (SNKPEESSVYEDENSVASMP) and 1055-1185 (SLEP…QSLQ). Pro residues predominate over residues 1090-1099 (FPPPRPPPPN). Low complexity predominate over residues 1110–1125 (QLQQQQQQQQQQQQQQ). Positions 1128–1145 (EEEEEKEQEEEGEKEEDL) are enriched in acidic residues. Over residues 1149 to 1168 (YFSSELTGSCAPNTEEQPQS) the composition is skewed to polar residues. The ASD2 domain occupies 1190–1469 (FALHPSNFVP…QLKCLKESLH (280 aa)). The stretch at 1380 to 1470 (SESNQEKLVL…LKCLKESLHL (91 aa)) forms a coiled coil.

Belongs to the shroom family. Interacts directly with F-actin. In terms of tissue distribution, detected in most adult tissues examined. Expressed in brain, lung, heart, liver, kidney, muscle and ovary. Expressed throughout the brain, with high expression in the brain stem and cerebellum and weaker expression in the hypothalamus, the hippocampus and the olfactory bulb. Expressed in wide range of cell types during development, including vascular endothelium and the polarized epithelium of the neural tube and kidney.

It is found in the cytoplasm. The protein localises to the cytoskeleton. Probable regulator of cytoskeletal architecture that plays an important role in development. May regulate cellular and cytoskeletal architecture by modulating the spatial distribution of myosin II. The polypeptide is Protein Shroom4 (Shroom4) (Mus musculus (Mouse)).